Here is a 630-residue protein sequence, read N- to C-terminus: Probable potassium transport system protein Kup 1 (630 aa).

A run of 12 helical transmembrane segments spans residues 15-35, 58-78, 104-124, 142-162, 173-193, 208-228, 252-272, 290-310, 342-362, 368-388, 399-419, and 424-444; these read LLAM…TSPL, LISL…VLFL, TAIL…DAMI, PALS…LFAV, FFGP…FMHI, AVAF…AVFL, WFTV…AFVL, ALLP…QAVI, IYLP…VFIF, LATA…VLAF, AWWA…FLGA, and IHDG…IMWT.

Belongs to the HAK/KUP transporter (TC 2.A.72) family.

It is found in the cell inner membrane. It catalyses the reaction K(+)(in) + H(+)(in) = K(+)(out) + H(+)(out). In terms of biological role, transport of potassium into the cell. Likely operates as a K(+):H(+) symporter. The protein is Probable potassium transport system protein Kup 1 of Sinorhizobium medicae (strain WSM419) (Ensifer medicae).